The sequence spans 187 residues: Peptidyl-tRNA hydrolase (187 aa).

Position 14 (tyrosine 14) interacts with tRNA. Catalysis depends on histidine 19, which acts as the Proton acceptor. TRNA contacts are provided by tyrosine 64, asparagine 66, and asparagine 112.

It belongs to the PTH family. In terms of assembly, monomer.

The protein resides in the cytoplasm. The enzyme catalyses an N-acyl-L-alpha-aminoacyl-tRNA + H2O = an N-acyl-L-amino acid + a tRNA + H(+). In terms of biological role, hydrolyzes ribosome-free peptidyl-tRNAs (with 1 or more amino acids incorporated), which drop off the ribosome during protein synthesis, or as a result of ribosome stalling. Catalyzes the release of premature peptidyl moieties from peptidyl-tRNA molecules trapped in stalled 50S ribosomal subunits, and thus maintains levels of free tRNAs and 50S ribosomes. The chain is Peptidyl-tRNA hydrolase from Bdellovibrio bacteriovorus (strain ATCC 15356 / DSM 50701 / NCIMB 9529 / HD100).